A 597-amino-acid chain; its full sequence is MIDENKKKNTNLNKNEYEEKSILKDLFHFFGKDFCVVQDTCIDFPVIWINKSLLLKVGKFLSSSPKPYNMLFDLHGVDERFRLNRLNLPEADFSIFYHLISIERNSDILIKVPLLKDDLNVSTFISLFPNANWYERETWEMFGIIFDQHPNLTHIIMPNEWKGFPLRKDYPARATEHESFFLDEQKEDLEMENLRFKPELWGMKRKNDNVDFMFLNLGPNHPSAHGAFRIVLQLDGENIVDCVPDIGYHHRGAEKMAERQSWHSYIPYTDRIEYLGGCVNEMPYVLAVEKLANISVPEKVEVIRVMLSELFRINSHLLYISTFIQDVGCMTPVFLAFTDRQKIYDLIEAITGARMHPAWFRIGGVAHDLPKGWNVLLKEFLEWMPKRLKYYVQLALENPILIRRSKGIAQYNQKEALQWGVTGSGLRSTGLDLDVRKWRPYSGYQNYTFEIPIGQGISDCYSRVIIKVEEIYQSLSILKQCLKNMPEGPFKSDHPLTTPPPKERVLKDIDTMITHFLQVSWGPVIPANESFQMIEATKGINSYYLISDGGTMSYRTRIRTPSFPHLQQIPSVIRGSLISDLIVYLGSIDFVMSDVDR.

Residues 1–187 (MIDENKKKNT…ESFFLDEQKE (187 aa)) are NADH dehydrogenase I subunit C. The NADH dehydrogenase I subunit D stretch occupies residues 211–597 (DFMFLNLGPN…IDFVMSDVDR (387 aa)).

In the N-terminal section; belongs to the complex I 30 kDa subunit family. It in the C-terminal section; belongs to the complex I 49 kDa subunit family. NDH-1 is composed of 13 different subunits. Subunits NuoB, CD, E, F, and G constitute the peripheral sector of the complex.

The protein resides in the cell inner membrane. The enzyme catalyses a quinone + NADH + 5 H(+)(in) = a quinol + NAD(+) + 4 H(+)(out). Its function is as follows. NDH-1 shuttles electrons from NADH, via FMN and iron-sulfur (Fe-S) centers, to quinones in the respiratory chain. The immediate electron acceptor for the enzyme in this species is believed to be ubiquinone. Couples the redox reaction to proton translocation (for every two electrons transferred, four hydrogen ions are translocated across the cytoplasmic membrane), and thus conserves the redox energy in a proton gradient. The polypeptide is NADH-quinone oxidoreductase subunit C/D (Buchnera aphidicola subsp. Schizaphis graminum (strain Sg)).